Reading from the N-terminus, the 337-residue chain is uncharacterized protein (337 aa).

This sequence belongs to the NAD(P)-dependent epimerase/dehydratase family.

This is an uncharacterized protein from Escherichia coli (strain K12).